The following is a 178-amino-acid chain: Small ribosomal subunit protein uS4 (178 aa).

An S4 RNA-binding domain is found at 104-166 (RRLQTMVYKK…PNSPMASENH (63 aa)). A disordered region spans residues 157-178 (PNSPMASENHPERTAAVSEENQ).

The protein belongs to the universal ribosomal protein uS4 family. As to quaternary structure, part of the 30S ribosomal subunit. Contacts protein S5. The interaction surface between S4 and S5 is involved in control of translational fidelity.

One of the primary rRNA binding proteins, it binds directly to 16S rRNA where it nucleates assembly of the body of the 30S subunit. Its function is as follows. With S5 and S12 plays an important role in translational accuracy. In Methanococcus maripaludis (strain C7 / ATCC BAA-1331), this protein is Small ribosomal subunit protein uS4.